Reading from the N-terminus, the 213-residue chain is Cytokinin riboside 5'-monophosphate phosphoribohydrolase LOG1 (213 aa).

Residues E78, 96–97 (RK), 113–119 (GYGTLEE), and T125 each bind substrate.

It belongs to the LOG family. Expressed in roots and shoots. Detected in the vascular tissues of roots, cotyledons, leaves and pistils, in the shoot apical meristem and in immature flowers.

It localises to the cytoplasm. The protein localises to the nucleus. It catalyses the reaction N(6)-(dimethylallyl)adenosine 5'-phosphate + H2O = N(6)-dimethylallyladenine + D-ribose 5-phosphate. The enzyme catalyses 9-ribosyl-trans-zeatin 5'-phosphate + H2O = trans-zeatin + D-ribose 5-phosphate. Functionally, cytokinin-activating enzyme working in the direct activation pathway. Phosphoribohydrolase that converts inactive cytokinin nucleotides to the biologically active free-base forms. This is Cytokinin riboside 5'-monophosphate phosphoribohydrolase LOG1 (LOG1) from Arabidopsis thaliana (Mouse-ear cress).